The chain runs to 428 residues: Histidine--tRNA ligase (428 aa).

It belongs to the class-II aminoacyl-tRNA synthetase family. Homodimer.

The protein resides in the cytoplasm. It carries out the reaction tRNA(His) + L-histidine + ATP = L-histidyl-tRNA(His) + AMP + diphosphate + H(+). This is Histidine--tRNA ligase from Lactobacillus helveticus (strain DPC 4571).